We begin with the raw amino-acid sequence, 1135 residues long: Protocadherin-18 (1135 aa).

Residues 1–27 (MHQMNAKMHFRFVFALLIVSFNHDVLG) form the signal peptide. 6 Cadherin domains span residues 28–137 (KNLK…SPQF), 138–246 (SRSL…SPAF), 247–354 (EQQS…KPEI), 361–465 (PGKE…PPHF), 466–576 (QRSR…VPVV), and 582–688 (RNNT…STAM). The Extracellular portion of the chain corresponds to 28 to 699 (KNLKYRIYEE…SVSQASLDVS (672 aa)). Asn103 carries N-linked (GlcNAc...) asparagine glycosylation. Asn269, Asn420, Asn559, Asn583, and Asn641 each carry an N-linked (GlcNAc...) asparagine glycan. A helical transmembrane segment spans residues 700 to 720 (MIIIISLGAICAVLLVIMVLF). At 721-1135 (ATRCNREKKD…NKLLQDVRQS (415 aa)) the chain is on the cytoplasmic side. Disordered stretches follow at residues 769 to 800 (LPIR…NSHQ), 869 to 889 (SLKD…DLGR), 942 to 1003 (DYRS…STSS), and 1023 to 1046 (YSEC…PAKT). Residues 791 to 800 (GSRQSHNSHQ) are compositionally biased toward polar residues. Residues 869–878 (SLKDSGRGDS) show a composition bias toward basic and acidic residues. An interaction with DAB1 region spans residues 893–1135 (IDRLLGEGFS…NKLLQDVRQS (243 aa)). Residues 1028 to 1039 (EVDRSNSLERRK) are compositionally biased toward basic and acidic residues.

In terms of assembly, interacts with DAB1. In terms of tissue distribution, expressed in all tissues, with highest expression in lung and ovary.

The protein resides in the cell membrane. Its function is as follows. Potential calcium-dependent cell-adhesion protein. The sequence is that of Protocadherin-18 (PCDH18) from Homo sapiens (Human).